A 916-amino-acid polypeptide reads, in one-letter code: DNA topoisomerase 1 alpha (916 aa).

Residues 1–369 (MGTETVSKPV…SSPSSGDGQK (369 aa)) form a disordered region. The span at 34-47 (SNSNQSKSNSQRSK) shows a compositional bias: low complexity. The span at 60-76 (PVTSPNGTTPSNKTSIV) shows a compositional bias: polar residues. Low complexity predominate over residues 77-93 (KSSMPSSSSKASPAKSP). Positions 102–119 (VKDRSQLQKDQSECKIEH) are enriched in basic and acidic residues. Polar residues predominate over residues 130–148 (SILSGNKGPTSSRQVSSPQ). Residues 149–168 (PEKKNNGDRPLDRASRIIKD) show a composition bias toward basic and acidic residues. Phosphoserine is present on Ser-170. The segment covering 230 to 239 (KNSSADQSSL) has biased composition (polar residues). Over residues 253–267 (MKQDSVKKEIDDKGR) the composition is skewed to basic and acidic residues. Over residues 285–294 (GTDDDDDDDV) the composition is skewed to acidic residues. Thr-286 bears the Phosphothreonine mark. Residues 354 to 366 (YSTSSKSSPSSGD) show a composition bias toward low complexity. Interaction with DNA regions lie at residues 577–578 (KY), 640–645 (RAGNEK), and 731–733 (TAK). A Topo IB-type catalytic domain is found at 584-914 (GSSLKGLSDK…MDVEPEYRFS (331 aa)). Residues 778-860 (QRTVSKTHGA…ERDMHTKEDL (83 aa)) are a coiled coil. Tyr-872 (O-(3'-phospho-DNA)-tyrosine intermediate) is an active-site residue.

The protein belongs to the type IB topoisomerase family. Interacts with DEK3. As to expression, expressed in inflorescence meristems. Expressed in primordia of sepals, petals, stamens, carpels and ovules. Expressed in midstage embryos.

Its subcellular location is the nucleus. The catalysed reaction is ATP-independent breakage of single-stranded DNA, followed by passage and rejoining.. Releases the supercoiling and torsional tension of DNA introduced during the DNA replication and transcription by transiently cleaving and rejoining one strand of the DNA duplex. Introduces a single-strand break via transesterification at a target site in duplex DNA. The scissile phosphodiester is attacked by the catalytic tyrosine of the enzyme, resulting in the formation of a DNA-(3'-phosphotyrosyl)-enzyme intermediate and the expulsion of a 5'-OH DNA strand. The free DNA strand then rotates around the intact phosphodiester bond on the opposing strand, thus removing DNA supercoils. Finally, in the religation step, the DNA 5'-OH attacks the covalent intermediate to expel the active-site tyrosine and restore the DNA phosphodiester backbone. Can complement a TOP1-deficient yeast mutant. Plays a critical role in the maintenance of a regular pattern of organ initiation. Topoisomerases I enzymes (TOP1A and TOP1B) are essential for plant survival. Functions together with the stem cell maintenance gene WUSCHEL (WUS) in stem cell regulation. Required to maintain developmentally regulated gene repression. Functions synergistically with chromatin remodeling factors. Is required for the repression of WUS expression in flower development. Plays a role in polycomb group (PcG) protein-mediated histone H3 trimethylation on 'Lys-27' (H3K27me3) at the WUS gene locus. H3K27me3 induces transcriptional repression of WUS. May assist AGAMOUS (AG) in recruiting PcG proteins to WUS locus. Reduces nucleosome density, especially at genes that are targets of PcG proteins. Plays a role in epigenetic silencing. Involved in RNA-directed DNA methylation (RdDM) by promoting Pol V transcription to generate long non-coding RNA transcripts. Is dispensable for Pol IV-mediated small interfering RNA (siRNA) biogenesis. Promotes transposable element (TE) silencing at endogenous RdDM target loci through histone H3 dimethylation of 'Lys-9' (H3K9me2). Promotes the production of Pol V-dependent long non-coding transcripts that facilitate the recruitment of siRNA-AGO4 and AGO4 occupancy at TEs. The chain is DNA topoisomerase 1 alpha from Arabidopsis thaliana (Mouse-ear cress).